The sequence spans 90 residues: UPF0297 protein Swol_0469 (90 aa).

This sequence belongs to the UPF0297 family.

The chain is UPF0297 protein Swol_0469 from Syntrophomonas wolfei subsp. wolfei (strain DSM 2245B / Goettingen).